The chain runs to 132 residues: L-ectoine synthase (132 aa).

It belongs to the ectoine synthase family.

It carries out the reaction (2S)-4-acetamido-2-aminobutanoate = L-ectoine + H2O. It functions in the pathway amine and polyamine biosynthesis; ectoine biosynthesis; L-ectoine from L-aspartate 4-semialdehyde: step 3/3. In terms of biological role, catalyzes the circularization of gamma-N-acetyl-alpha,gamma-diaminobutyric acid (ADABA) to ectoine (1,4,5,6-tetrahydro-2-methyl-4-pyrimidine carboxylic acid), which is an excellent osmoprotectant. This Saccharophagus degradans (strain 2-40 / ATCC 43961 / DSM 17024) protein is L-ectoine synthase.